Reading from the N-terminus, the 388-residue chain is F-box protein At3g49510 (388 aa).

Positions 1–47 (MTTISDLSDDLVGDILSRVPFTSLISVRSTCKKWNALSKNQIFGRKT) constitute an F-box domain.

This chain is F-box protein At3g49510, found in Arabidopsis thaliana (Mouse-ear cress).